Consider the following 700-residue polypeptide: Kin of IRRE-like protein 2 (700 aa).

Positions 1 to 19 (MLASALLVFLCCFKGHAGS) are cleaved as a signal peptide. The Extracellular segment spans residues 20 to 507 (SPHFLQQPED…GRRDLLPTVR (488 aa)). Ig-like C2-type domains are found at residues 21–115 (PHFL…AQLH), 120–219 (PEAP…VTLS), 224–304 (PMVT…TALE), 309–391 (PILQ…ARLT), and 395–497 (PPVV…QIHL). An intrachain disulfide couples Cys-42 to Cys-100. Asn-140 carries N-linked (GlcNAc...) asparagine glycosylation. 2 disulfides stabilise this stretch: Cys-143–Cys-201 and Cys-245–Cys-288. A Cell attachment site motif is present at residues 146–148 (RGD). Asn-298 carries an N-linked (GlcNAc...) asparagine glycan. Intrachain disulfides connect Cys-330–Cys-372 and Cys-416–Cys-482. N-linked (GlcNAc...) asparagine glycosylation is present at Asn-481. Residues 508–528 (IVAGAASAATSLLMVITGVVL) traverse the membrane as a helical segment. Topologically, residues 529–700 (CCWRHGSLSK…PSHQRLQTHV (172 aa)) are cytoplasmic. A disordered region spans residues 542–576 (LVRIPGSSEGSSSRGPEEETGSSEDRGPIVHTDHS). At Ser-563 the chain carries Phosphoserine. A compositionally biased stretch (basic and acidic residues) spans 564–576 (SEDRGPIVHTDHS). A phosphotyrosine mark is found at Tyr-595, Tyr-596, and Tyr-653. A disordered region spans residues 671–700 (FGPPELSSGTPPFPYATLSPPSHQRLQTHV). The span at 689-700 (SPPSHQRLQTHV) shows a compositional bias: polar residues.

Belongs to the immunoglobulin superfamily. In terms of assembly, homodimer. Interacts with NPHS2/podocin (via the C-terminus). Interacts with NPHS1 (via the Ig-like domains). Interacts with FYN. In terms of processing, N-glycosylated. Phosphorylated at Ser-548 or Ser-549; due to site ambiguity, the exact position of the serine phosphorylation could not be determined. Phosphorylation at residues Tyr-631 and/or Tyr-632. FYN mediates tyrosine phosphorylation in pancreatic beta-cells. Post-translationally, the extracellular domain is cleaved leading to the generation of a soluble fragment and a membrane-bound C-terminal fragment, which is further cleaved by gamma-secretase. Highly expressed in beta-cells of the pancreatic islets. Expression is seen in podocytes of kidney glomeruli, and in the cerebellum and hindbrain at 12.5 dpc, in the spinal cord at 10.5 dpc, and in retina and hypothalamus at 13.5 dpc.

It is found in the cell membrane. Functionally, may regulate basal insulin secretion. This Mus musculus (Mouse) protein is Kin of IRRE-like protein 2 (Kirrel2).